A 379-amino-acid chain; its full sequence is Queuine tRNA-ribosyltransferase (379 aa).

Asp-91 functions as the Proton acceptor in the catalytic mechanism. Residues 91-95, Asp-145, Gln-189, and Gly-216 each bind substrate; that span reads DSGGF. The tract at residues 247–253 is RNA binding; the sequence is GVGKPED. Residue Asp-266 is the Nucleophile of the active site. Residues 271 to 275 form an RNA binding; important for wobble base 34 recognition region; it reads TRNAR. Positions 304, 306, 309, and 335 each coordinate Zn(2+).

Belongs to the queuine tRNA-ribosyltransferase family. As to quaternary structure, homodimer. Within each dimer, one monomer is responsible for RNA recognition and catalysis, while the other monomer binds to the replacement base PreQ1. Zn(2+) serves as cofactor.

The catalysed reaction is 7-aminomethyl-7-carbaguanine + guanosine(34) in tRNA = 7-aminomethyl-7-carbaguanosine(34) in tRNA + guanine. It functions in the pathway tRNA modification; tRNA-queuosine biosynthesis. Its function is as follows. Catalyzes the base-exchange of a guanine (G) residue with the queuine precursor 7-aminomethyl-7-deazaguanine (PreQ1) at position 34 (anticodon wobble position) in tRNAs with GU(N) anticodons (tRNA-Asp, -Asn, -His and -Tyr). Catalysis occurs through a double-displacement mechanism. The nucleophile active site attacks the C1' of nucleotide 34 to detach the guanine base from the RNA, forming a covalent enzyme-RNA intermediate. The proton acceptor active site deprotonates the incoming PreQ1, allowing a nucleophilic attack on the C1' of the ribose to form the product. After dissociation, two additional enzymatic reactions on the tRNA convert PreQ1 to queuine (Q), resulting in the hypermodified nucleoside queuosine (7-(((4,5-cis-dihydroxy-2-cyclopenten-1-yl)amino)methyl)-7-deazaguanosine). This Vibrio cholerae serotype O1 (strain ATCC 39315 / El Tor Inaba N16961) protein is Queuine tRNA-ribosyltransferase.